A 256-amino-acid polypeptide reads, in one-letter code: Trypsin alpha (256 aa).

The first 22 residues, 1 to 22, serve as a signal peptide directing secretion; that stretch reads MLKIVILLSAVVCALGGTVPEG. Positions 23–30 are cleaved as a propeptide — activation peptide; it reads LLPQLDGR. In terms of domain architecture, Peptidase S1 spans 31–254; the sequence is IVGGSATTIS…LRSWVVSTAN (224 aa). Cysteines 56 and 72 form a disulfide. Active-site charge relay system residues include His71 and Asp116. 2 disulfide bridges follow: Cys180-Cys197 and Cys206-Cys230. Ser210 functions as the Charge relay system in the catalytic mechanism.

Belongs to the peptidase S1 family. Synthesized in the midgut of both larvae and adults, primarily in the ventriculus and gastric caeca.

The protein resides in the secreted. The protein localises to the extracellular space. The enzyme catalyses Preferential cleavage: Arg-|-Xaa, Lys-|-Xaa.. The protein is Trypsin alpha (alphaTry) of Drosophila melanogaster (Fruit fly).